We begin with the raw amino-acid sequence, 270 residues long: Phosphatidate cytidylyltransferase (270 aa).

A run of 7 helical transmembrane segments spans residues 19–39 (LWLT…IGLA), 53–73 (TAFS…LLIL), 76–96 (GALL…VTQW), 101–121 (GWPA…SLLR), 126–146 (FGFT…IAAY), 183–203 (LVAS…ALLL), and 248–268 (ALLY…AIFF).

It belongs to the CDS family.

It localises to the cell inner membrane. It catalyses the reaction a 1,2-diacyl-sn-glycero-3-phosphate + CTP + H(+) = a CDP-1,2-diacyl-sn-glycerol + diphosphate. It functions in the pathway phospholipid metabolism; CDP-diacylglycerol biosynthesis; CDP-diacylglycerol from sn-glycerol 3-phosphate: step 3/3. This Brucella melitensis biotype 1 (strain ATCC 23456 / CCUG 17765 / NCTC 10094 / 16M) protein is Phosphatidate cytidylyltransferase (cdsA).